The following is a 66-amino-acid chain: Large ribosomal subunit protein bL31 (66 aa).

Zn(2+)-binding residues include Cys-16, Cys-18, Cys-36, and Cys-39.

This sequence belongs to the bacterial ribosomal protein bL31 family. Type A subfamily. Part of the 50S ribosomal subunit. Requires Zn(2+) as cofactor.

Functionally, binds the 23S rRNA. The protein is Large ribosomal subunit protein bL31 of Campylobacter jejuni subsp. jejuni serotype O:6 (strain 81116 / NCTC 11828).